A 272-amino-acid chain; its full sequence is Putative pyruvate, phosphate dikinase regulatory protein (272 aa).

154–161 (GVSRTSKS) provides a ligand contact to ADP.

This sequence belongs to the pyruvate, phosphate/water dikinase regulatory protein family. PDRP subfamily.

It catalyses the reaction N(tele)-phospho-L-histidyl/L-threonyl-[pyruvate, phosphate dikinase] + ADP = N(tele)-phospho-L-histidyl/O-phospho-L-threonyl-[pyruvate, phosphate dikinase] + AMP + H(+). The catalysed reaction is N(tele)-phospho-L-histidyl/O-phospho-L-threonyl-[pyruvate, phosphate dikinase] + phosphate + H(+) = N(tele)-phospho-L-histidyl/L-threonyl-[pyruvate, phosphate dikinase] + diphosphate. Its function is as follows. Bifunctional serine/threonine kinase and phosphorylase involved in the regulation of the pyruvate, phosphate dikinase (PPDK) by catalyzing its phosphorylation/dephosphorylation. This is Putative pyruvate, phosphate dikinase regulatory protein from Wolbachia pipientis subsp. Culex pipiens (strain wPip).